A 128-amino-acid chain; its full sequence is Large-conductance mechanosensitive channel (128 aa).

Transmembrane regions (helical) follow at residues 11–31 (FALK…AAFG) and 70–90 (GAFI…FIFV).

Belongs to the MscL family. As to quaternary structure, homopentamer.

The protein resides in the cell membrane. Its function is as follows. Channel that opens in response to stretch forces in the membrane lipid bilayer. May participate in the regulation of osmotic pressure changes within the cell. This chain is Large-conductance mechanosensitive channel, found in Listeria innocua serovar 6a (strain ATCC BAA-680 / CLIP 11262).